Reading from the N-terminus, the 349-residue chain is Thiamine thiazole synthase, chloroplastic (349 aa).

Residues 1–45 (MAAIASTLSLSSTKPQRLFDSSFHGSAISAAPISIGLKPRSFSVR) constitute a chloroplast transit peptide. Residues alanine 94, 114–115 (EQ), glycine 122, and alanine 187 each bind substrate. Position 216 is a 2,3-didehydroalanine (Cys) (cysteine 216). Substrate-binding positions include aspartate 218, histidine 233, methionine 285, and 295–297 (RMG).

The protein belongs to the THI4 family. As to quaternary structure, homooctamer. Interacts with RBCX1 and RBCX1. Interacts with CPK33. Fe cation is required as a cofactor. In terms of processing, during the catalytic reaction, a sulfide is transferred from Cys-216 to a reaction intermediate, generating a dehydroalanine residue. Not phosphorylated in vitro by CPK33. Expressed at high levels in chloroplast-containing parenchymatic cells of leaves, inflorescence shoots and flowers, and at lower levels in the vascular system. In young plants, detected in roots and shoots including cotyledons, leaves and hypocotyls. Also observed in apical meristematic regions, siliques and embryos. Low expression in roots, limited to the vascular tissue. Broadly expressed in roots, cotyledons, leaves, hypocotyls, inflorescences, siliques, and strongly in guard cells.

The protein resides in the plastid. The protein localises to the chloroplast. It is found in the mitochondrion. Its subcellular location is the cell membrane. The enzyme catalyses [ADP-thiazole synthase]-L-cysteine + glycine + NAD(+) = [ADP-thiazole synthase]-dehydroalanine + ADP-5-ethyl-4-methylthiazole-2-carboxylate + nicotinamide + 3 H2O + 2 H(+). Functionally, involved in biosynthesis of the thiamine precursor thiazole. Catalyzes the conversion of NAD and glycine to adenosine diphosphate 5-(2-hydroxyethyl)-4-methylthiazole-2-carboxylic acid (ADT), an adenylated thiazole intermediate. The reaction includes an iron-dependent sulfide transfer from a conserved cysteine residue of the protein to a thiazole intermediate. The enzyme can only undergo a single turnover, which suggests it is a suicide enzyme. May have additional roles in adaptation to various stress conditions and in DNA damage tolerance. Acts as a positive regulator for the abscisic acid-induced activation of slow type anion channels during stomatal closure by repressing CPK33 kinase activity. The protein is Thiamine thiazole synthase, chloroplastic of Arabidopsis thaliana (Mouse-ear cress).